The sequence spans 418 residues: Gamma-glutamyl phosphate reductase (418 aa).

Belongs to the gamma-glutamyl phosphate reductase family.

It is found in the cytoplasm. It catalyses the reaction L-glutamate 5-semialdehyde + phosphate + NADP(+) = L-glutamyl 5-phosphate + NADPH + H(+). Its pathway is amino-acid biosynthesis; L-proline biosynthesis; L-glutamate 5-semialdehyde from L-glutamate: step 2/2. Catalyzes the NADPH-dependent reduction of L-glutamate 5-phosphate into L-glutamate 5-semialdehyde and phosphate. The product spontaneously undergoes cyclization to form 1-pyrroline-5-carboxylate. The sequence is that of Gamma-glutamyl phosphate reductase from Pelodictyon phaeoclathratiforme (strain DSM 5477 / BU-1).